Reading from the N-terminus, the 59-residue chain is Large ribosomal subunit protein eL37 (59 aa).

Zn(2+) contacts are provided by cysteine 20, cysteine 23, cysteine 35, and cysteine 38. Residues 20–38 (CRRCGRHSFHRRKGYCAAC) form a C4-type zinc finger.

This sequence belongs to the eukaryotic ribosomal protein eL37 family. The cofactor is Zn(2+).

Functionally, binds to the 23S rRNA. In Archaeoglobus fulgidus (strain ATCC 49558 / DSM 4304 / JCM 9628 / NBRC 100126 / VC-16), this protein is Large ribosomal subunit protein eL37 (rpl37e).